The chain runs to 902 residues: MWIPSKLTRPGRLHNAIVRPRVLDLLQQAPYYKLVLFRSPAGYGKTTMAAQWLSDKPNVGWYSIDDSDNDGFRFVNYLLQALNKATNYNCSNAQKLAEKRQFSSLRSLFSEVFAEMADFQHECYVVLDDYHLITNDEIHESMRFFLKHMPDNLTVVVTSRAAPPLGTANLRVRDLMIEIGNEMLAFDTEETTRFFNQRIADGIDEDMANNLRTYVEGWPSALQLIALQAQHQNRTLAQTVESVSQFNHAHLWDYLVEEVFDLLDQETRHFLMQVSVLDHFNDELVFALTQREDALGMIESLNRFGLFIYPLEGEQNWFRFHNLFGEFLSHERLARIPQQEKDLHRNAAVAWLKQKAPHQAIHHAQKSNDTDLIVEILNEFGWKMFNQGELTTLESAINQLDKDLLFSHPKLSMLRAWLAQSQHRYNQVGKLLAEAEEEHKKRNIEIDSGYQGQANALLAQVAINSNQPEHALELAELALSQLDPTVYRSRIVATSVVGEVNHVLGKLDRALPMMQQTEKLARQYQVYHQALWAILQQSEIMIAQGYVQAAFELQDSGFRLIEEQQLQHVPLHEFLLRIRAQVLWCWNRLDEAEECAYKGLQILENHSPSKHLHSYSMLARIAIGRGELDKAGKFIEHIQHLMKQSTYHVDWTANASLSLILFWQARGNTEAIQEWLNTAVRPESACNHFQQLQWRNIARAHINLGQYDEAREALDFLQSEAHRTNLVTDTNRNLVVEAILAARQKDEEQAKTLLKEALVMTNQTGMVGNFLTDGATIGGLLEKLSLRHELGDLERHRAQQLMKDISSNQRSRSIHFDEDFIEKLVNHPNVPELVRTSPLTQREWQVLGLIYSGFSNEQIAQELDVAGTTIKTHIRNLYQKLNIANRKEAIVTAENLLQLMGY.

ATP is bound at residue 39-46; it reads SPAGYGKT. The HTH luxR-type domain maps to 832–897; it reads ELVRTSPLTQ…EAIVTAENLL (66 aa). The H-T-H motif DNA-binding region spans 856–875; it reads NEQIAQELDVAGTTIKTHIR.

Belongs to the MalT family. In terms of assembly, monomer in solution. Oligomerizes to an active state in the presence of the positive effectors ATP and maltotriose.

Its activity is regulated as follows. Activated by ATP and maltotriose, which are both required for DNA binding. Functionally, positively regulates the transcription of the maltose regulon whose gene products are responsible for uptake and catabolism of malto-oligosaccharides. Specifically binds to the promoter region of its target genes, recognizing a short DNA motif called the MalT box. The polypeptide is HTH-type transcriptional regulator MalT (Vibrio campbellii (strain ATCC BAA-1116)).